Reading from the N-terminus, the 309-residue chain is 2-phospho-L-lactate transferase (309 aa).

Residues Asp-50 and Lys-89 each contribute to the 7,8-didemethyl-8-hydroxy-5-deazariboflavin site.

Belongs to the CofD family. As to quaternary structure, homodimer. Mg(2+) is required as a cofactor.

The catalysed reaction is (2S)-lactyl-2-diphospho-5'-guanosine + 7,8-didemethyl-8-hydroxy-5-deazariboflavin = oxidized coenzyme F420-0 + GMP + H(+). It functions in the pathway cofactor biosynthesis; coenzyme F420 biosynthesis. In terms of biological role, catalyzes the transfer of the 2-phospholactate moiety from (2S)-lactyl-2-diphospho-5'-guanosine to 7,8-didemethyl-8-hydroxy-5-deazariboflavin (FO) with the formation of oxidized coenzyme F420-0 and GMP. This Methanococcus maripaludis (strain C7 / ATCC BAA-1331) protein is 2-phospho-L-lactate transferase.